The primary structure comprises 203 residues: Auxin-induced protein 22E (203 aa).

An EAR-like (transcriptional repression) motif is present at residues 15-19 (LRLGL). Residues 15-77 (LRLGLPGSDE…DHNEDSVQPA (63 aa)) are disordered. Residues 43–52 (SSPELEESRC) show a composition bias toward basic and acidic residues. Positions 58–67 (SDSSDSTTTS) are enriched in low complexity. The PB1 domain maps to 107 to 199 (GMYLKVSMAG…RIIKGSEAKG (93 aa)).

The protein belongs to the Aux/IAA family. As to quaternary structure, homodimers and heterodimers.

The protein resides in the nucleus. Functionally, aux/IAA proteins are short-lived transcriptional factors that function as repressors of early auxin response genes at low auxin concentrations. Repression is thought to result from the interaction with auxin response factors (ARFs), proteins that bind to the auxin-responsive promoter element (AuxRE). Formation of heterodimers with ARF proteins may alter their ability to modulate early auxin response genes expression. The polypeptide is Auxin-induced protein 22E (AUX22E) (Vigna radiata var. radiata (Mung bean)).